The following is a 395-amino-acid chain: Elongation factor Tu (395 aa).

Residues 10 to 204 form the tr-type G domain; the sequence is KPHVNIGTIG…IVDEYIPTPE (195 aa). The tract at residues 19–26 is G1; the sequence is GHVDHGKT. 19-26 contributes to the GTP binding site; sequence GHVDHGKT. T26 serves as a coordination point for Mg(2+). The interval 60–64 is G2; it reads GITIN. Residues 81–84 form a G3 region; sequence DAPG. Residues 81 to 85 and 136 to 139 contribute to the GTP site; these read DAPGH and NKAD. The interval 136–139 is G4; it reads NKAD. The segment at 174–176 is G5; that stretch reads SAL.

This sequence belongs to the TRAFAC class translation factor GTPase superfamily. Classic translation factor GTPase family. EF-Tu/EF-1A subfamily. As to quaternary structure, monomer.

Its subcellular location is the cytoplasm. It catalyses the reaction GTP + H2O = GDP + phosphate + H(+). Its function is as follows. GTP hydrolase that promotes the GTP-dependent binding of aminoacyl-tRNA to the A-site of ribosomes during protein biosynthesis. This chain is Elongation factor Tu, found in Lactococcus lactis subsp. lactis (strain IL1403) (Streptococcus lactis).